We begin with the raw amino-acid sequence, 871 residues long: Tegument protein UL47 homolog (871 aa).

Positions 1-212 (MDQHHGARGG…DEDDMEVIRD (212 aa)) are disordered. The short motif at 13-33 (IRRPRRSIESRSHPFRATGNT) is the Nuclear localization signal element. 2 stretches are compositionally biased toward polar residues: residues 30 to 41 (TGNTQRTYSTPR) and 59 to 81 (EQAS…STSF). 3 stretches are compositionally biased toward acidic residues: residues 114–134 (SSSE…EEDQ), 146–155 (SSDENDEEED), and 185–207 (SESE…EDDM).

Belongs to the alphaherpesvirinae HHV-1 UL47 family. Interacts with US3 kinase. Interacts with UL31 and UL34; these interactions seem important for efficient virion nuclear egress. Interacts with UL41/VHS. Post-translationally, phosphorylated by US3. This phosphorylation is required for proper nuclear localization.

It localises to the virion tegument. The protein resides in the host nucleus. Its subcellular location is the host cytoplasm. Its function is as follows. Tegument protein that can bind to various RNA transcripts. Plays a role in the attenuation of selective viral and cellular mRNA degradation by modulating the activity of host shutoff RNase UL41/VHS. Also plays a role in the primary envelopment of virions in the perinuclear space, probably by interacting with two nuclear egress proteins UL31 and UL34. This chain is Tegument protein UL47 homolog, found in Equus caballus (Horse).